A 105-amino-acid polypeptide reads, in one-letter code: U1-sicaritoxin-Li1b (105 aa).

The first 19 residues, 1 to 19 (MKLLFEGLLVLVLIAFVVA), serve as a signal peptide directing secretion. The propeptide occupies 20 to 36 (EFESDAEKWEALITQER). Cystine bridges form between Cys38–Cys55, Cys46–Cys60, Cys54–Cys73, and Cys62–Cys71. Arg82 is subject to Arginine amide. The propeptide occupies 86–105 (ALMVDPETHRMLSLHRLSEE).

This sequence belongs to the neurotoxin 28 (Litx) family. Expressed by the venom gland.

Its subcellular location is the secreted. Its function is as follows. Toxin active against insects (S.frugiperda larvae). May act on sodium (Nav) or calcium (Cav) channels. The polypeptide is U1-sicaritoxin-Li1b (Loxosceles intermedia (Brown spider)).